The primary structure comprises 235 residues: Nucleoside diphosphate kinase 4, chloroplastic (235 aa).

ATP contacts are provided by lysine 93, phenylalanine 141, arginine 169, threonine 175, arginine 186, and asparagine 196. Catalysis depends on histidine 199, which acts as the Pros-phosphohistidine intermediate.

The protein belongs to the NDK family. Homohexamer. Requires Mg(2+) as cofactor.

It is found in the plastid. Its subcellular location is the chloroplast thylakoid lumen. It carries out the reaction a 2'-deoxyribonucleoside 5'-diphosphate + ATP = a 2'-deoxyribonucleoside 5'-triphosphate + ADP. The enzyme catalyses a ribonucleoside 5'-diphosphate + ATP = a ribonucleoside 5'-triphosphate + ADP. Major role in the synthesis of nucleoside triphosphates other than ATP. The ATP gamma phosphate is transferred to the NDP beta phosphate via a ping-pong mechanism, using a phosphorylated active-site intermediate. Shows the highest specificity towards GDP. This is Nucleoside diphosphate kinase 4, chloroplastic (NDK4) from Spinacia oleracea (Spinach).